A 290-amino-acid polypeptide reads, in one-letter code: Triplex capsid protein 1 (290 aa).

It belongs to the herpesviridae TRX1 protein family. In terms of assembly, interacts with TRX2, MCP and capsid vertex component 2/CVC2.

The protein resides in the virion. Its subcellular location is the host nucleus. Structural component of the T=16 icosahedral capsid. The capsid is composed of pentamers and hexamers of major capsid protein/MCP, which are linked together by heterotrimers called triplexes. These triplexes are formed by a single molecule of triplex protein 1/TRX1 and two copies of triplex protein 2/TRX2. Additionally, TRX1 is required for efficient transport of TRX2 to the nucleus, which is the site of capsid assembly. This chain is Triplex capsid protein 1, found in Human cytomegalovirus (strain AD169) (HHV-5).